The chain runs to 510 residues: Lysine--tRNA ligase (510 aa).

2 residues coordinate Mg(2+): Glu-420 and Glu-427.

It belongs to the class-II aminoacyl-tRNA synthetase family. Homodimer. The cofactor is Mg(2+).

The protein localises to the cytoplasm. The enzyme catalyses tRNA(Lys) + L-lysine + ATP = L-lysyl-tRNA(Lys) + AMP + diphosphate. The chain is Lysine--tRNA ligase from Vibrio campbellii (strain ATCC BAA-1116).